A 346-amino-acid polypeptide reads, in one-letter code: [LysW]-lysine/[LysW]-ornithine hydrolase (346 aa).

H68 is a binding site for Zn(2+). D70 is a catalytic residue. Position 92 (D92) interacts with Zn(2+). E122 acts as the Proton acceptor in catalysis. Positions 123, 146, and 317 each coordinate Zn(2+).

It belongs to the peptidase M20A family. LysK subfamily. It depends on Zn(2+) as a cofactor. The cofactor is Co(2+).

The protein resides in the cytoplasm. It carries out the reaction [amino-group carrier protein]-C-terminal-gamma-(L-lysyl)-L-glutamate + H2O = [amino-group carrier protein]-C-terminal-L-glutamate + L-lysine. The enzyme catalyses [amino-group carrier protein]-C-terminal-gamma-(L-ornithyl)-L-glutamate + H2O = [amino-group carrier protein]-C-terminal-L-glutamate + L-ornithine. The protein operates within amino-acid biosynthesis; L-lysine biosynthesis via AAA pathway; L-lysine from L-alpha-aminoadipate (Thermus route): step 5/5. It functions in the pathway amino-acid biosynthesis; L-arginine biosynthesis. Catalyzes the release of L-lysine from [LysW]-gamma-L-lysine and the release of L-ornithine from [LysW]-L-ornithine. This is [LysW]-lysine/[LysW]-ornithine hydrolase from Saccharolobus islandicus (strain Y.N.15.51 / Yellowstone #2) (Sulfolobus islandicus).